The primary structure comprises 285 residues: tRNA (cytidine(32)/guanosine(34)-2'-O)-methyltransferase (285 aa).

Glycine 53, tryptophan 55, aspartate 83, aspartate 99, and aspartate 124 together coordinate S-adenosyl-L-methionine. The Proton acceptor role is filled by lysine 164.

This sequence belongs to the class I-like SAM-binding methyltransferase superfamily. RNA methyltransferase RlmE family. TRM7 subfamily.

The protein resides in the cytoplasm. The catalysed reaction is cytidine(32)/guanosine(34) in tRNA + 2 S-adenosyl-L-methionine = 2'-O-methylcytidine(32)/2'-O-methylguanosine(34) in tRNA + 2 S-adenosyl-L-homocysteine + 2 H(+). In terms of biological role, methylates the 2'-O-ribose of nucleotides at positions 32 and 34 of the tRNA anticodon loop of substrate tRNAs. Requires trm732 for methylation of the cytidine at position 32 of the anticodon loop of substrate tRNAs. Requires trm734 for methylation of the nucleotide at position 34 of the anticodon loop of substrate tRNAs. Methylates tRNA(Phe). The polypeptide is tRNA (cytidine(32)/guanosine(34)-2'-O)-methyltransferase (Schizosaccharomyces pombe (strain 972 / ATCC 24843) (Fission yeast)).